A 129-amino-acid polypeptide reads, in one-letter code: Small ribosomal subunit protein uS8 (129 aa).

This sequence belongs to the universal ribosomal protein uS8 family. As to quaternary structure, part of the 30S ribosomal subunit.

Its function is as follows. One of the primary rRNA binding proteins, it binds directly to 16S rRNA central domain where it helps coordinate assembly of the platform of the 30S subunit. This is Small ribosomal subunit protein uS8 from Methanothrix thermoacetophila (strain DSM 6194 / JCM 14653 / NBRC 101360 / PT) (Methanosaeta thermophila).